The sequence spans 1406 residues: DNA-directed RNA polymerase subunit beta' (1406 aa).

Cys70, Cys72, Cys85, and Cys88 together coordinate Zn(2+). Residues Asp460, Asp462, and Asp464 each contribute to the Mg(2+) site. Positions 814, 888, 895, and 898 each coordinate Zn(2+).

The protein belongs to the RNA polymerase beta' chain family. In terms of assembly, the RNAP catalytic core consists of 2 alpha, 1 beta, 1 beta' and 1 omega subunit. When a sigma factor is associated with the core the holoenzyme is formed, which can initiate transcription. Mg(2+) serves as cofactor. Requires Zn(2+) as cofactor.

It catalyses the reaction RNA(n) + a ribonucleoside 5'-triphosphate = RNA(n+1) + diphosphate. Its function is as follows. DNA-dependent RNA polymerase catalyzes the transcription of DNA into RNA using the four ribonucleoside triphosphates as substrates. In Photorhabdus laumondii subsp. laumondii (strain DSM 15139 / CIP 105565 / TT01) (Photorhabdus luminescens subsp. laumondii), this protein is DNA-directed RNA polymerase subunit beta'.